We begin with the raw amino-acid sequence, 72 residues long: Beta-defensin 104 (72 aa).

The N-terminal stretch at 1–22 (MQRLVLLLAISLLLYQDLPVRS) is a signal peptide. Disulfide bonds link Cys-30–Cys-57, Cys-37–Cys-51, and Cys-41–Cys-58.

It belongs to the beta-defensin family. In terms of tissue distribution, high expression in the testis. Gastric antrum exhibited relatively high levels. A lower expression is observed in uterus and neutrophils thyroid gland, lung, and kidney. No detectable expression in other tissues tested.

It is found in the secreted. Has antimicrobial activity. Synergistic effects with lysozyme and DEFB103. This Homo sapiens (Human) protein is Beta-defensin 104 (DEFB104A).